Here is a 233-residue protein sequence, read N- to C-terminus: 5'-methylthioadenosine/S-adenosylhomocysteine nucleosidase (233 aa).

The active-site Proton acceptor is Glu12. Residues Gly78, Ile152, and Met173–Glu174 contribute to the substrate site. The active-site Proton donor is the Asp197.

The protein belongs to the PNP/UDP phosphorylase family. MtnN subfamily. As to quaternary structure, homodimer.

The enzyme catalyses S-adenosyl-L-homocysteine + H2O = S-(5-deoxy-D-ribos-5-yl)-L-homocysteine + adenine. It catalyses the reaction S-methyl-5'-thioadenosine + H2O = 5-(methylsulfanyl)-D-ribose + adenine. It carries out the reaction 5'-deoxyadenosine + H2O = 5-deoxy-D-ribose + adenine. It participates in amino-acid biosynthesis; L-methionine biosynthesis via salvage pathway; S-methyl-5-thio-alpha-D-ribose 1-phosphate from S-methyl-5'-thioadenosine (hydrolase route): step 1/2. Its function is as follows. Catalyzes the irreversible cleavage of the glycosidic bond in both 5'-methylthioadenosine (MTA) and S-adenosylhomocysteine (SAH/AdoHcy) to adenine and the corresponding thioribose, 5'-methylthioribose and S-ribosylhomocysteine, respectively. Also cleaves 5'-deoxyadenosine, a toxic by-product of radical S-adenosylmethionine (SAM) enzymes, into 5-deoxyribose and adenine. Thus, is required for in vivo function of the radical SAM enzymes biotin synthase and lipoic acid synthase, that are inhibited by 5'-deoxyadenosine accumulation. This Yersinia pseudotuberculosis serotype O:1b (strain IP 31758) protein is 5'-methylthioadenosine/S-adenosylhomocysteine nucleosidase.